Here is an 85-residue protein sequence, read N- to C-terminus: uncharacterized protein (85 aa).

This is an uncharacterized protein from Acidianus filamentous virus 2 (isolate Italy/Pozzuoli) (AFV-2).